The primary structure comprises 274 residues: Large ribosomal subunit protein uL2 (274 aa).

Disordered stretches follow at residues 28 to 55 (APHAPLLEKKSKSGGRNNNGRITTRHVG) and 224 to 274 (VAMN…RRRK).

The protein belongs to the universal ribosomal protein uL2 family. In terms of assembly, part of the 50S ribosomal subunit. Forms a bridge to the 30S subunit in the 70S ribosome.

In terms of biological role, one of the primary rRNA binding proteins. Required for association of the 30S and 50S subunits to form the 70S ribosome, for tRNA binding and peptide bond formation. It has been suggested to have peptidyltransferase activity; this is somewhat controversial. Makes several contacts with the 16S rRNA in the 70S ribosome. The polypeptide is Large ribosomal subunit protein uL2 (Pseudomonas putida (strain GB-1)).